Here is a 309-residue protein sequence, read N- to C-terminus: 4-hydroxy-3-methylbut-2-enyl diphosphate reductase (309 aa).

Cysteine 13 is a [4Fe-4S] cluster binding site. Histidine 42 and histidine 75 together coordinate (2E)-4-hydroxy-3-methylbut-2-enyl diphosphate. Residues histidine 42 and histidine 75 each contribute to the dimethylallyl diphosphate site. 2 residues coordinate isopentenyl diphosphate: histidine 42 and histidine 75. Position 97 (cysteine 97) interacts with [4Fe-4S] cluster. A (2E)-4-hydroxy-3-methylbut-2-enyl diphosphate-binding site is contributed by histidine 125. Histidine 125 contributes to the dimethylallyl diphosphate binding site. An isopentenyl diphosphate-binding site is contributed by histidine 125. Glutamate 127 functions as the Proton donor in the catalytic mechanism. Threonine 165 provides a ligand contact to (2E)-4-hydroxy-3-methylbut-2-enyl diphosphate. Position 195 (cysteine 195) interacts with [4Fe-4S] cluster. (2E)-4-hydroxy-3-methylbut-2-enyl diphosphate is bound by residues serine 223, serine 224, asparagine 225, and serine 267. Serine 223, serine 224, asparagine 225, and serine 267 together coordinate dimethylallyl diphosphate. Residues serine 223, serine 224, asparagine 225, and serine 267 each contribute to the isopentenyl diphosphate site.

The protein belongs to the IspH family. The cofactor is [4Fe-4S] cluster.

It carries out the reaction isopentenyl diphosphate + 2 oxidized [2Fe-2S]-[ferredoxin] + H2O = (2E)-4-hydroxy-3-methylbut-2-enyl diphosphate + 2 reduced [2Fe-2S]-[ferredoxin] + 2 H(+). The enzyme catalyses dimethylallyl diphosphate + 2 oxidized [2Fe-2S]-[ferredoxin] + H2O = (2E)-4-hydroxy-3-methylbut-2-enyl diphosphate + 2 reduced [2Fe-2S]-[ferredoxin] + 2 H(+). It participates in isoprenoid biosynthesis; dimethylallyl diphosphate biosynthesis; dimethylallyl diphosphate from (2E)-4-hydroxy-3-methylbutenyl diphosphate: step 1/1. Its pathway is isoprenoid biosynthesis; isopentenyl diphosphate biosynthesis via DXP pathway; isopentenyl diphosphate from 1-deoxy-D-xylulose 5-phosphate: step 6/6. Functionally, catalyzes the conversion of 1-hydroxy-2-methyl-2-(E)-butenyl 4-diphosphate (HMBPP) into a mixture of isopentenyl diphosphate (IPP) and dimethylallyl diphosphate (DMAPP). Acts in the terminal step of the DOXP/MEP pathway for isoprenoid precursor biosynthesis. The protein is 4-hydroxy-3-methylbut-2-enyl diphosphate reductase of Chlamydia abortus (strain DSM 27085 / S26/3) (Chlamydophila abortus).